Reading from the N-terminus, the 1386-residue chain is Lysophospholipase NTE1 (1386 aa).

At 1-19 the chain is on the cytoplasmic side; that stretch reads MGPEFEDSIPLVHSDNRTT. Residues 20–40 form a helical membrane-spanning segment; it reads TIYSVYIIISDIFSFVQWLLF. At 41 to 65 the chain is on the lumenal side; the sequence is KVLNLIIIDSPAFVLRLLSKNFEIN. A helical transmembrane segment spans residues 66-86; the sequence is LHLSSILATLIGVSVVTYLVI. The Cytoplasmic portion of the chain corresponds to 87-1386; sequence RYKFLTGYSH…KKILYRRNSI (1300 aa). Positions 394 to 416 are disordered; it reads EAEAENLPKKLKHHHRNQLQRTT. Residues 402-411 show a composition bias toward basic residues; sequence KKLKHHHRNQ. Residues 577–701 and 697–821 each bind a nucleoside 3',5'-cyclic phosphate; these read KRLL…LKNL and KLKN…VASK. The PNPLA domain occupies 1081–1245; sequence LVLGGGGSRG…LDNLPVNEMK (165 aa). The GXGXXG signature appears at 1085–1090; sequence GGGSRG. The short motif at 1112-1116 is the GXSXG element; sequence GTSIG. Residue S1114 is the Nucleophile of the active site. D1232 acts as the Proton acceptor in catalysis. Residues 1232–1234 carry the DGA/G motif; that stretch reads DGG.

This sequence belongs to the NTE family.

The protein resides in the endoplasmic reticulum membrane. It carries out the reaction a 1-acyl-sn-glycero-3-phosphocholine + H2O = sn-glycerol 3-phosphocholine + a fatty acid + H(+). Inhibited by organophosphorus esters. Intracellular phospholipase B that catalyzes the double deacylation of phosphatidylcholine (PC) to glycerophosphocholine (GroPCho). Plays an important role in membrane lipid homeostasis. Responsible for the rapid PC turnover in response to inositol, elevated temperatures, or when choline is present in the growth medium. This Candida albicans (strain SC5314 / ATCC MYA-2876) (Yeast) protein is Lysophospholipase NTE1 (NTE1).